The chain runs to 444 residues: Chromosome partition protein MukF (444 aa).

Positions 212–240 (LDETSGNLRELQDTLNAAGDKLQAQLLRI) are leucine-zipper.

This sequence belongs to the MukF family. In terms of assembly, interacts, and probably forms a ternary complex, with MukE and MukB via its C-terminal region. The complex formation is stimulated by calcium or magnesium. It is required for an interaction between MukE and MukB.

Its subcellular location is the cytoplasm. It is found in the nucleoid. Involved in chromosome condensation, segregation and cell cycle progression. May participate in facilitating chromosome segregation by condensation DNA from both sides of a centrally located replisome during cell division. Not required for mini-F plasmid partitioning. Probably acts via its interaction with MukB and MukE. Overexpression results in anucleate cells. It has a calcium binding activity. This Haemophilus influenzae (strain PittEE) protein is Chromosome partition protein MukF.